The primary structure comprises 144 residues: Large ribosomal subunit protein uL15 (144 aa).

Positions 1–57 are disordered; sequence MKLNDLSPAPGSRREKHRPGRGIGSGLGKTGGRGHKGQTSRSGGSIAPGFEGGQQPL. The span at 21–31 shows a compositional bias: gly residues; that stretch reads RGIGSGLGKTG.

This sequence belongs to the universal ribosomal protein uL15 family. Part of the 50S ribosomal subunit.

Its function is as follows. Binds to the 23S rRNA. In Pseudomonas putida (strain ATCC 700007 / DSM 6899 / JCM 31910 / BCRC 17059 / LMG 24140 / F1), this protein is Large ribosomal subunit protein uL15.